Reading from the N-terminus, the 298-residue chain is Quinolinate synthase (298 aa).

H19 and S36 together coordinate iminosuccinate. C81 contacts [4Fe-4S] cluster. Iminosuccinate-binding positions include 107 to 109 (YVN) and S124. C168 provides a ligand contact to [4Fe-4S] cluster. Residues 193 to 195 (HPE) and T210 contribute to the iminosuccinate site. C254 is a binding site for [4Fe-4S] cluster.

Belongs to the quinolinate synthase family. Type 2 subfamily. [4Fe-4S] cluster serves as cofactor.

Its subcellular location is the cytoplasm. It carries out the reaction iminosuccinate + dihydroxyacetone phosphate = quinolinate + phosphate + 2 H2O + H(+). It functions in the pathway cofactor biosynthesis; NAD(+) biosynthesis; quinolinate from iminoaspartate: step 1/1. In terms of biological role, catalyzes the condensation of iminoaspartate with dihydroxyacetone phosphate to form quinolinate. The polypeptide is Quinolinate synthase (Thermotoga petrophila (strain ATCC BAA-488 / DSM 13995 / JCM 10881 / RKU-1)).